Reading from the N-terminus, the 449-residue chain is MKTLLLLVGLLLTLENGQVLGDKAVSDRELQEMSTQGSNYINKEIKNALKGVKQIKNLIEQTNEERKSLLGTLEEAKKKKEGALNDTKDSEMKLKESQGVCNETMTALWEECKPCLKQTCMKFYARVCRSGSGLVGHQLEEFLNQSSPFYFWINGDRIDSLLENDRQQTHVLDVMQDSFDRASSIMDELFQDRFFTREPQDTYYYSPFSSPHRRSSLLFNPKSRFARNIMHFPMYRHLNFNDMFQPFFDMIHQAQQAMNLHLHRLPDQLPMTEFSEGDNHDRTVCKEIRHNSTGCLKMKDQCEKCQEILSVDCSTNNPSQMQLRQELNNSLQLAEKFTKLYDELLQSYQEKMLNTSSLLKQLNEQFSWVSQLANLTQGEDQYYLQVTTVSSHNSDSEVPSGLTRVVVKLFDSYPITVTVPEVVSRNNPKFMETVAEKALQEYRQKNREE.

The first 21 residues, 1 to 21, serve as a signal peptide directing secretion; sequence MKTLLLLVGLLLTLENGQVLG. The short motif at 77–80 is the Nuclear localization signal element; it reads KKKK. N-linked (GlcNAc...) asparagine glycans are attached at residues Asn-85 and Asn-102. Cystine bridges form between Cys-101-Cys-313, Cys-112-Cys-305, Cys-115-Cys-302, Cys-120-Cys-295, and Cys-128-Cys-285. At Ser-132 the chain carries Phosphoserine. Asn-144, Asn-291, Asn-328, Asn-354, and Asn-374 each carry an N-linked (GlcNAc...) asparagine glycan. The residue at position 396 (Ser-396) is a Phosphoserine. The short motif at 443 to 447 is the Nuclear localization signal element; the sequence is RQKNR.

It belongs to the clusterin family. In terms of assembly, antiparallel disulfide-linked heterodimer of an alpha chain and a beta chain. Self-associates and forms higher oligomers. Interacts with a broad range of misfolded proteins, including APP, APOC2 and LYZ. Slightly acidic pH promotes interaction with misfolded proteins. Forms high-molecular weight oligomers upon interaction with misfolded proteins. Interacts with APOA1, LRP2, CLUAP1 and PON1. Interacts with the complement membrane attack complex. Interacts (via alpha chain) with XRCC6. Interacts with SYVN1, COMMD1, BTRC, CUL1 and with ubiquitin and SCF (SKP1-CUL1-F-box protein) E3 ubiquitin-protein ligase complexes. Interacts (via alpha chain) with BAX in stressed cells, where BAX undergoes a conformation change leading to association with the mitochondrial membrane. Does not interact with BAX in unstressed cells. Found in a complex with LTF, CLU, EPPIN and SEMG1. Interacts (immaturely glycosylated pre-secreted form) with HSPA5; this interaction promotes CLU stability and facilitates stress-induced CLU retrotranslocation from the secretory pathway to the mitochondria, thereby reducing stress-induced apoptosis by stabilizing mitochondrial membrane integrity. Interacts with BCL2L1; this interaction releases and activates BAX and promotes cell death. Interacts with TGFBR2 and ACVR1. Interacts (secreted form) with STMN3; this interaction may act as an important modulator during neuronal differentiation. Interacts with VLDLR and LRP8. In terms of processing, proteolytically cleaved on its way through the secretory system, probably within the Golgi lumen. Proteolytic cleavage is not necessary for its chaperone activity. All non-secreted forms are not proteolytically cleaved. Chaperone activity of uncleaved forms is dependent on a non-reducing environment. Polyubiquitinated, leading to proteasomal degradation. Under cellular stress, the intracellular level of cleaved form is reduced due to proteasomal degradation. Post-translationally, heavily N-glycosylated. About 30% of the protein mass is comprised of complex N-linked carbohydrate. Endoplasmic reticulum (ER) stress induces changes in glycosylation status and increases level of hypoglycosylated forms. Core carbohydrates are essential for chaperone activity. Non-secreted forms are hypoglycosylated or unglycosylated.

The protein localises to the secreted. It localises to the nucleus. The protein resides in the cytoplasm. Its subcellular location is the mitochondrion membrane. It is found in the cytosol. The protein localises to the microsome. It localises to the endoplasmic reticulum. The protein resides in the mitochondrion. Its subcellular location is the perinuclear region. It is found in the cytoplasmic vesicle. The protein localises to the secretory vesicle. It localises to the chromaffin granule. Functions as extracellular chaperone that prevents aggregation of non native proteins. Prevents stress-induced aggregation of blood plasma proteins. Inhibits formation of amyloid fibrils by APP, APOC2, B2M, CALCA, CSN3, SNCA and aggregation-prone LYZ variants (in vitro). Does not require ATP. Maintains partially unfolded proteins in a state appropriate for subsequent refolding by other chaperones, such as HSPA8/HSC70. Does not refold proteins by itself. Binding to cell surface receptors triggers internalization of the chaperone-client complex and subsequent lysosomal or proteasomal degradation. When secreted, protects cells against apoptosis and against cytolysis by complement: inhibits assembly of the complement membrane attack complex (MAC) by preventing polymerization of C9 pore component of the MAC complex. Intracellular forms interact with ubiquitin and SCF (SKP1-CUL1-F-box protein) E3 ubiquitin-protein ligase complexes and promote the ubiquitination and subsequent proteasomal degradation of target proteins. Promotes proteasomal degradation of COMMD1 and IKBKB. Modulates NF-kappa-B transcriptional activity. Following stress, promotes apoptosis. Inhibits apoptosis when associated with the mitochondrial membrane by interference with BAX-dependent release of cytochrome c into the cytoplasm. Plays a role in the regulation of cell proliferation. An intracellular form suppresses stress-induced apoptosis by stabilizing mitochondrial membrane integrity through interaction with HSPA5. Secreted form does not affect caspase or BAX-mediated intrinsic apoptosis and TNF-induced NF-kappa-B-activity. Secreted form act as an important modulator during neuronal differentiation through interaction with STMN3. Plays a role in the clearance of immune complexes that arise during cell injury. The chain is Clusterin (CLU) from Equus caballus (Horse).